The chain runs to 241 residues: MALNPLEQFKVYTVIELPRLFGYDVSFTNSSLFMMISVILVILFLLFGIKKGAVIPGYLQAAVEYVYDFVISIIENNTGSKGLQHIPLIFTVFIFILSCNLVGVLPYSFTVTSHVIVTFALSMVVFIYITIVGFKERGVEFLRILLPKGTPSWLAPIIIIIKLFAYLVRPVSLSIRLAANMIAGHTIIKVIAGFIVNMNIFFTPAPFLFIIALIGFEVFVAILQAYIFTILTCVYLSDAVK.

Helical transmembrane passes span Asn-29–Ile-49, Val-54–Ile-74, Ile-86–Pro-106, His-114–Phe-134, Trp-153–Leu-173, Leu-177–Asn-197, Ile-200–Val-220, and Ala-221–Lys-241.

Belongs to the ATPase A chain family. In terms of assembly, F-type ATPases have 2 components, CF(1) - the catalytic core - and CF(0) - the membrane proton channel. CF(1) has five subunits: alpha(3), beta(3), gamma(1), delta(1), epsilon(1). CF(0) has three main subunits: a(1), b(2) and c(9-12). The alpha and beta chains form an alternating ring which encloses part of the gamma chain. CF(1) is attached to CF(0) by a central stalk formed by the gamma and epsilon chains, while a peripheral stalk is formed by the delta and b chains.

The protein localises to the cell inner membrane. Functionally, key component of the proton channel; it plays a direct role in the translocation of protons across the membrane. The chain is ATP synthase subunit a from Wolbachia sp. subsp. Drosophila simulans (strain wRi).